Here is a 534-residue protein sequence, read N- to C-terminus: Probable RNA-binding protein 46 (534 aa).

RRM domains lie at 61–139 (CEVF…VSLD), 141–223 (CRLF…WASP), and 236–308 (KVLY…LAKP).

The protein localises to the cytoplasm. Essential for male and female fertility, playing a crucial role in regulating germ cell development by ensuring the proper progression of meiosis prophase I. This is Probable RNA-binding protein 46 (rbm46) from Xenopus tropicalis (Western clawed frog).